The sequence spans 191 residues: Large ribosomal subunit protein uL3 (191 aa).

Positions 119-138 are disordered; the sequence is AAHGSRFHRRPGSIGNREWP.

It belongs to the universal ribosomal protein uL3 family. In terms of assembly, part of the 50S ribosomal subunit. Forms a cluster with proteins L14 and L19.

One of the primary rRNA binding proteins, it binds directly near the 3'-end of the 23S rRNA, where it nucleates assembly of the 50S subunit. The sequence is that of Large ribosomal subunit protein uL3 (rplC) from Helicobacter pylori (strain ATCC 700392 / 26695) (Campylobacter pylori).